A 257-amino-acid polypeptide reads, in one-letter code: Phosphate import ATP-binding protein PstB (257 aa).

Residues 5–246 (LEIKDLTAFY…EVIFTSPKNE (242 aa)) form the ABC transporter domain. 37–44 (GPSGCGKS) is a binding site for ATP.

It belongs to the ABC transporter superfamily. Phosphate importer (TC 3.A.1.7) family. As to quaternary structure, the complex is composed of two ATP-binding proteins (PstB), two transmembrane proteins (PstC and PstA) and a solute-binding protein (PstS).

It localises to the cell membrane. It catalyses the reaction phosphate(out) + ATP + H2O = ADP + 2 phosphate(in) + H(+). Functionally, part of the ABC transporter complex PstSACB involved in phosphate import. Responsible for energy coupling to the transport system. This chain is Phosphate import ATP-binding protein PstB, found in Tropheryma whipplei (strain Twist) (Whipple's bacillus).